A 155-amino-acid chain; its full sequence is Ribosomal RNA large subunit methyltransferase H (155 aa).

S-adenosyl-L-methionine is bound by residues L73, G104, and 123 to 128 (LSPLTL).

This sequence belongs to the RNA methyltransferase RlmH family. As to quaternary structure, homodimer.

It localises to the cytoplasm. It carries out the reaction pseudouridine(1915) in 23S rRNA + S-adenosyl-L-methionine = N(3)-methylpseudouridine(1915) in 23S rRNA + S-adenosyl-L-homocysteine + H(+). In terms of biological role, specifically methylates the pseudouridine at position 1915 (m3Psi1915) in 23S rRNA. This Azotobacter vinelandii (strain DJ / ATCC BAA-1303) protein is Ribosomal RNA large subunit methyltransferase H.